A 410-amino-acid chain; its full sequence is MNNGINVNSEIGKLKSVLLHRPGAEVENITPDTMKQLLFDDIPYLKIAQKEHDFFAQTLRDNGAETVYIENLATEVFEKSSETKEEFLSHLLHEAGYRPGRTYDGLTEYLTSMSTKDMVEKIYAGVRKNELDIKRTALSDMAGSDAENYFYLNPLPNAYFTRDPQASMGVGMTINKMTFPARQPESLITEYVMANHPRFKDTPIWRDRNHTTRIEGGDELILNKTTVAIGVSERTSSKTIQNLAKELFANPLSTFDTVLAVEIPHNHAMMHLDTVFTMINHDQFTVFPGIMDGAGNINVFILRPGKDDEVEIEHLTDLKAALKKVLNLSELDLIECGAGDPIAAPREQWNDGSNTLAIAPGEIVTYDRNYVTVELLKEHGIKVHEILSSELGRGRGGARCMSQPLWREDL.

The active-site Amidino-cysteine intermediate is the C400.

Belongs to the arginine deiminase family.

Its subcellular location is the cytoplasm. The enzyme catalyses L-arginine + H2O = L-citrulline + NH4(+). Its pathway is amino-acid degradation; L-arginine degradation via ADI pathway; carbamoyl phosphate from L-arginine: step 1/2. In Lactococcus lactis subsp. lactis (strain IL1403) (Streptococcus lactis), this protein is Arginine deiminase (arcA).